The chain runs to 411 residues: Arginine deiminase (411 aa).

Cys-399 serves as the catalytic Amidino-cysteine intermediate.

The protein belongs to the arginine deiminase family.

The protein localises to the cytoplasm. It catalyses the reaction L-arginine + H2O = L-citrulline + NH4(+). It participates in amino-acid degradation; L-arginine degradation via ADI pathway; carbamoyl phosphate from L-arginine: step 1/2. In Latilactobacillus sakei subsp. sakei (strain 23K) (Lactobacillus sakei subsp. sakei), this protein is Arginine deiminase.